Consider the following 71-residue polypeptide: Small ribosomal subunit protein eS17 (71 aa).

This sequence belongs to the eukaryotic ribosomal protein eS17 family.

In Pyrobaculum aerophilum (strain ATCC 51768 / DSM 7523 / JCM 9630 / CIP 104966 / NBRC 100827 / IM2), this protein is Small ribosomal subunit protein eS17.